The primary structure comprises 297 residues: Large ribosomal subunit protein uL15m (297 aa).

The transit peptide at 1–22 (MAGPVRGAAGPWALDLLRALPR) directs the protein to the mitochondrion. The interval 27-68 (NLRPNPGSRKPERRRRGQRRGRKCGRGHKGERQRGTRPRLGF) is disordered. Basic residues predominate over residues 37-53 (PERRRRGQRRGRKCGRG).

The protein belongs to the universal ribosomal protein uL15 family. As to quaternary structure, component of the mitochondrial ribosome large subunit (39S) which comprises a 16S rRNA and about 50 distinct proteins.

Its subcellular location is the mitochondrion. This Bos taurus (Bovine) protein is Large ribosomal subunit protein uL15m (MRPL15).